The sequence spans 671 residues: Leucine aminopeptidase 2 (671 aa).

Residues 184-186 (QLE) and 311-316 (PYGGME) contribute to the substrate site. His-340 lines the Zn(2+) pocket. The Proton acceptor role is filled by Glu-341. Zn(2+) is bound by residues His-344 and Glu-363. The active-site Proton donor is the Tyr-429.

The protein belongs to the peptidase M1 family. The cofactor is Zn(2+).

Its subcellular location is the cytoplasm. The protein resides in the nucleus. The catalysed reaction is an epoxide + H2O = an ethanediol. Inhibited by 3-(4-benzyloxyphenyl)-2-(R)-amino-1-propanethiol (thioamine) and N-hydroxy-N-(2-(S)-amino-3-(4-benzyloxyphenyl)propyl)-5-carboxypen-tanamide (hydroxamic acid). The aminopeptidase activity is stimulated by LTA(4). Functionally, aminopeptidase that preferentially cleaves di- and tripeptides. Also has low epoxide hydrolase activity (in vitro). Can hydrolyze the epoxide leukotriene LTA(4) but it forms preferentially 5,6-dihydroxy-7,9,11,14-eicosatetraenoic acid rather than the cytokine leukotriene B(4) as the product compared to the homologous mammalian enzyme (in vitro). The protein is Leucine aminopeptidase 2 of Saccharomyces cerevisiae (strain YJM789) (Baker's yeast).